The following is a 92-amino-acid chain: Acylphosphatase (92 aa).

Residues 5–92 form the Acylphosphatase-like domain; the sequence is CIAAYVYGVV…ADFQGFSIRY (88 aa). Residues R20 and N38 contribute to the active site.

Belongs to the acylphosphatase family.

It carries out the reaction an acyl phosphate + H2O = a carboxylate + phosphate + H(+). The protein is Acylphosphatase (acyP) of Serratia proteamaculans (strain 568).